Reading from the N-terminus, the 297-residue chain is E3 ubiquitin-protein ligase TRIM52 (297 aa).

The RING-type; degenerate zinc finger occupies 20–62 (CAICLDYFKDPVSISCGHNFCRGCVTQLWSKEDEEDQNEEEDE). The important for rapid proteolytic degradation by the proteasome stretch occupies residues 72–167 (VGAMDGWDGS…DEDEDEELYP (96 aa)). The segment at 222–263 (NDQGMCFKHQEALKLFCEVDKEAICVVCRESRSHKQHSVLPL) adopts a B box-type zinc-finger fold. Positions 227, 230, 249, and 255 each coordinate Zn(2+).

Belongs to the TRIM/RBCC family. As to quaternary structure, (Microbial infection) Interacts with Japanese encephalitis virus non-structural protein 2 (NS2A); mediates the ubiquitination of NS2A, targeting it for proteasome-mediated degradation. Autoubiquitinated. Polyubiquitinated. Undergoes extremely rapid proteolytic degradation by the proteasome.

The protein localises to the cytoplasm. The protein resides in the cytosol. Its subcellular location is the nucleus. The catalysed reaction is S-ubiquitinyl-[E2 ubiquitin-conjugating enzyme]-L-cysteine + [acceptor protein]-L-lysine = [E2 ubiquitin-conjugating enzyme]-L-cysteine + N(6)-ubiquitinyl-[acceptor protein]-L-lysine.. The protein operates within protein modification; protein ubiquitination. Its function is as follows. E3 ubiquitin-protein ligase. Positively regulates the NF-kappa-B signaling pathway. In terms of biological role, (Microbial infection) Exhibits antiviral activity against Japanese encephalitis virus (JEV). Ubiquitinates the viral non-structural protein 2 (NS2A) and targets it for proteasome-mediated degradation. The protein is E3 ubiquitin-protein ligase TRIM52 (TRIM52) of Homo sapiens (Human).